The primary structure comprises 247 residues: ATP synthase subunit a, chloroplastic (247 aa).

Transmembrane regions (helical) follow at residues 38–58 (QVLI…TIAV), 95–115 (VPFI…GALL), 134–154 (INTT…AGLT), 199–219 (LVVV…VMLL), and 220–240 (GLFT…AYIG).

It belongs to the ATPase A chain family. F-type ATPases have 2 components, CF(1) - the catalytic core - and CF(0) - the membrane proton channel. CF(1) has five subunits: alpha(3), beta(3), gamma(1), delta(1), epsilon(1). CF(0) has four main subunits: a, b, b' and c.

Its subcellular location is the plastid. The protein localises to the chloroplast thylakoid membrane. Functionally, key component of the proton channel; it plays a direct role in the translocation of protons across the membrane. The chain is ATP synthase subunit a, chloroplastic from Solanum lycopersicum (Tomato).